The following is a 264-amino-acid chain: Electron transfer flavoprotein subunit beta (264 aa).

Residues A6, N36 to D39, V64, G119 to S122, and Y127 to T130 each bind AMP.

In terms of assembly, heterodimer of an alpha and a beta subunit. Forms a ternary complex with trimethylamine dehydrogenase.

Heterodimeric electron transfer flavoprotein that accepts electrons from trimethylamine dehydrogenase. It transfers the electrons to the main respiratory chain via ETF-ubiquinone oxidoreductase (ETF dehydrogenase). EtfB binds an AMP molecule that probably has a purely structural role. The polypeptide is Electron transfer flavoprotein subunit beta (etfB) (Methylophilus methylotrophus (Bacterium W3A1)).